The sequence spans 88 residues: Kunitz-type U15-theraphotoxin-Hhn1o (88 aa).

The signal sequence occupies residues 1–27; it reads MGIARILSAVLFLSVLFVVTFPTLLSA. A propeptide spanning residues 28–33 is cleaved from the precursor; the sequence is DHHDGR. The BPTI/Kunitz inhibitor domain occupies 37–85; sequence CRLPSDRGRCKASFERWYFNGTTCTKFVYGGYGGNDNRFPTEKARMKRC. C37 and C85 are oxidised to a cystine.

It belongs to the venom Kunitz-type family. 01 (intermediate) subfamily. In terms of tissue distribution, expressed by the venom gland.

It localises to the secreted. Functionally, serine protease inhibitor that inhibits trypsin at a molar ratio of 1:1. In Cyriopagopus hainanus (Chinese bird spider), this protein is Kunitz-type U15-theraphotoxin-Hhn1o.